The following is a 379-amino-acid chain: L-lactate dehydrogenase (379 aa).

One can recognise an FMN hydroxy acid dehydrogenase domain in the interval Met-1–Pro-379. Tyr-24 is a substrate binding site. The FMN site is built by Ser-106 and Gln-127. Tyr-129 serves as a coordination point for substrate. An FMN-binding site is contributed by Thr-155. Arg-164 contacts substrate. Lys-251 contacts FMN. His-275 functions as the Proton acceptor in the catalytic mechanism. A substrate-binding site is contributed by Arg-278. An FMN-binding site is contributed by Asp-306–Arg-330.

The protein belongs to the FMN-dependent alpha-hydroxy acid dehydrogenase family. FMN serves as cofactor.

It localises to the cell inner membrane. The enzyme catalyses (S)-lactate + A = pyruvate + AH2. In terms of biological role, catalyzes the conversion of L-lactate to pyruvate. Is coupled to the respiratory chain. The sequence is that of L-lactate dehydrogenase from Stenotrophomonas maltophilia (strain K279a).